Here is a 265-residue protein sequence, read N- to C-terminus: uncharacterized protein (265 aa).

CBS domains lie at 9-64 (MTKK…EKVE) and 67-126 (MTKR…TTPK).

This is an uncharacterized protein from Methanocaldococcus jannaschii (strain ATCC 43067 / DSM 2661 / JAL-1 / JCM 10045 / NBRC 100440) (Methanococcus jannaschii).